The chain runs to 368 residues: Geranylgeranyl pyrophosphate synthase dpfgD (368 aa).

Isopentenyl diphosphate is bound by residues Lys-48, Arg-51, and His-80. Positions 87 and 91 each coordinate Mg(2+). Arg-96 is a binding site for dimethylallyl diphosphate. Residue Arg-97 coordinates isopentenyl diphosphate. Residues Lys-174, Thr-175, and Gln-208 each contribute to the dimethylallyl diphosphate site. Asp-211 provides a ligand contact to Mg(2+). Residues Asn-215, Lys-225, and Lys-235 each contribute to the dimethylallyl diphosphate site.

Belongs to the FPP/GGPP synthase family. Requires Mg(2+) as cofactor.

It catalyses the reaction isopentenyl diphosphate + dimethylallyl diphosphate = (2E)-geranyl diphosphate + diphosphate. It carries out the reaction isopentenyl diphosphate + (2E)-geranyl diphosphate = (2E,6E)-farnesyl diphosphate + diphosphate. The catalysed reaction is isopentenyl diphosphate + (2E,6E)-farnesyl diphosphate = (2E,6E,10E)-geranylgeranyl diphosphate + diphosphate. Its pathway is secondary metabolite biosynthesis; terpenoid biosynthesis. Its function is as follows. Geranylgeranyl pyrophosphate synthase; part of the gene cluster that mediates the biosynthesis of diterpenoid pyrones. The first step of the pathway is the synthesis of the alpha-pyrone moiety by the polyketide synthase dpfgA via condensation of one acetyl-CoA starter unit with 3 malonyl-CoA units and 2 methylations. The alpha-pyrone is then combined with geranylgeranyl pyrophosphate (GGPP) formed by the GGPP synthase dpfgD through the action of the prenyltransferase dpfgC to yield a linear alpha-pyrone diterpenoid. Subsequent steps in the diterpenoid pyrone biosynthetic pathway involve the decalin core formation, which is initiated by the epoxidation of the C10-C11 olefin by the FAD-dependent oxidoreductase dpfgE, and is followed by a cyclization cascade catalyzed by the terpene cyclase dpfgB. The short chain dehydrogenase/reductase dpfgG then oxidizes the 8S hydroxy group to a ketone and the short chain dehydrogenase/reductase dpfgH reduces the ketone to the 8R hydroxy group to yield higginsianin B. Higginsianin B is further methylated by the methyltransferase dpfgI to produce the intermediate named FDDP B. The cytochrome P450 monooxygenase dfgpJ then catalyzes a three-step oxidation at C-27 to generate a carboxylic acid as well as C-26 hydroxylation. Finally, methyltransferase dpfgK methylates the carboxylic acid generated by dpfgJ, yielding the final diterpenoid pyrones from the pathway which were named FDDP D and FDDP E. The chain is Geranylgeranyl pyrophosphate synthase dpfgD from Gibberella zeae (strain ATCC MYA-4620 / CBS 123657 / FGSC 9075 / NRRL 31084 / PH-1) (Wheat head blight fungus).